The following is a 95-amino-acid chain: Aspartyl/glutamyl-tRNA(Asn/Gln) amidotransferase subunit C (95 aa).

The protein belongs to the GatC family. Heterotrimer of A, B and C subunits.

The catalysed reaction is L-glutamyl-tRNA(Gln) + L-glutamine + ATP + H2O = L-glutaminyl-tRNA(Gln) + L-glutamate + ADP + phosphate + H(+). It catalyses the reaction L-aspartyl-tRNA(Asn) + L-glutamine + ATP + H2O = L-asparaginyl-tRNA(Asn) + L-glutamate + ADP + phosphate + 2 H(+). In terms of biological role, allows the formation of correctly charged Asn-tRNA(Asn) or Gln-tRNA(Gln) through the transamidation of misacylated Asp-tRNA(Asn) or Glu-tRNA(Gln) in organisms which lack either or both of asparaginyl-tRNA or glutaminyl-tRNA synthetases. The reaction takes place in the presence of glutamine and ATP through an activated phospho-Asp-tRNA(Asn) or phospho-Glu-tRNA(Gln). This Ruegeria sp. (strain TM1040) (Silicibacter sp.) protein is Aspartyl/glutamyl-tRNA(Asn/Gln) amidotransferase subunit C.